The following is a 646-amino-acid chain: Peptidylprolyl isomerase domain and WD repeat-containing protein 1 (646 aa).

The segment at 1–30 (MAAESGSDFQQRRRRRRDPEEPEKTELSER) is disordered. Alanine 2 is subject to N-acetylalanine. The span at 17–30 (RDPEEPEKTELSER) shows a compositional bias: basic and acidic residues. 7 WD repeats span residues 80–118 (ASMY…FWKK), 124–162 (EFVK…VFDV), 168–208 (INML…IYDG), 213–252 (QPLH…YWTG), 271–309 (TDLY…IFRF), 345–386 (AVER…VETN), and 401–453 (MQLA…MFTK). A compositionally biased stretch (basic and acidic residues) spans 455–478 (EPEDTKSADSDRDVFNEKPSKEEV). Positions 455–490 (EPEDTKSADSDRDVFNEKPSKEEVMAATQAEGPKRV) are disordered. In terms of domain architecture, PPIase cyclophilin-type spans 490 to 645 (VSDSAIIHTS…EDVSIINITV (156 aa)).

Belongs to the cyclophilin-type PPIase family. PPIL1 subfamily. In terms of assembly, identified in the spliceosome C complex.

Its subcellular location is the nucleus. The enzyme catalyses [protein]-peptidylproline (omega=180) = [protein]-peptidylproline (omega=0). With respect to regulation, inhibited by cyclosporin A (CsA). Its function is as follows. PPIase that catalyzes the cis-trans isomerization of proline imidic peptide bonds in oligopeptides and may therefore assist protein folding. May be involved in pre-mRNA splicing. This chain is Peptidylprolyl isomerase domain and WD repeat-containing protein 1, found in Homo sapiens (Human).